Here is a 138-residue protein sequence, read N- to C-terminus: Histone H2AX (138 aa).

Residues 1-23 are disordered; that stretch reads MSTTGKGGKAKGKTASSKQVSRS. Ser-2 is subject to N-acetylserine. N6-acetyllysine is present on residues Lys-6, Lys-9, Lys-11, Lys-13, and Lys-18. Ser-123 carries the phosphoserine modification. Lys-124 is covalently cross-linked (Glycyl lysine isopeptide (Lys-Gly) (interchain with G-Cter in ubiquitin)). Ser-125, Ser-130, and Ser-135 each carry phosphoserine. A [ST]-Q motif motif is present at residues 135–136; it reads SQ.

It belongs to the histone H2A family. The nucleosome is a histone octamer containing two molecules each of H2A, H2B, H3 and H4 assembled in one H3-H4 heterotetramer and two H2A-H2B heterodimers. The octamer wraps approximately 147 bp of DNA. Monoubiquitination of Lys-124 gives a specific tag for epigenetic transcriptional repression. In terms of processing, acetylation occurs almost exclusively in the MAC.

The protein localises to the nucleus. It localises to the chromosome. Functionally, core component of nucleosome. Nucleosomes wrap and compact DNA into chromatin, limiting DNA accessibility to the cellular machineries which require DNA as a template. Histones thereby play a central role in transcription regulation, DNA repair, DNA replication and chromosomal stability. DNA accessibility is regulated via a complex set of post-translational modifications of histones, also called histone code, and nucleosome remodeling. In Tetrahymena pyriformis, this protein is Histone H2AX (HTA1).